The following is a 628-amino-acid chain: Monoterpene synthase like 2, chloroplastic (628 aa).

Mg(2+)-binding residues include Asp-379, Asp-383, and Asp-531. The DDXXD motif signature appears at 379-383; it reads DDIYD.

The protein belongs to the terpene synthase family. Tpsd subfamily. The cofactor is Mg(2+). It depends on Mn(2+) as a cofactor.

The protein resides in the plastid. The protein localises to the chloroplast. It functions in the pathway terpene metabolism; oleoresin biosynthesis. The protein operates within secondary metabolite biosynthesis; terpenoid biosynthesis. Functionally, monoterpene synthase (TPS) involved in the biosynthesis of monoterpene natural products included in conifer oleoresin secretions and volatile emissions; these compounds contribute to biotic and abiotic stress defense against herbivores and pathogens. The sequence is that of Monoterpene synthase like 2, chloroplastic from Pinus banksiana (Jack pine).